We begin with the raw amino-acid sequence, 307 residues long: Protein FAM76A (307 aa).

2 disordered regions span residues 142–195 (QRKH…ESIT) and 287–307 (KQAA…ITSP). The segment covering 161–182 (SRLSGGSHYNSQKTLSTSSIQN) has biased composition (polar residues). The stretch at 217–299 (IIAQLKEEVA…AALSKSKKSE (83 aa)) forms a coiled coil.

It belongs to the FAM76 family.

This Bos taurus (Bovine) protein is Protein FAM76A (FAM76A).